The following is a 149-amino-acid chain: Pleckstrin homology domain-containing family J member 1 (149 aa).

One can recognise a PH domain in the interval 15–108; that stretch reads PAEMAAELGM…WMEALRRASY (94 aa).

Expressed in testis and liver.

The sequence is that of Pleckstrin homology domain-containing family J member 1 (PLEKHJ1) from Homo sapiens (Human).